The following is a 440-amino-acid chain: O-glycoside alpha-1,2-mannosyltransferase homolog 4 (440 aa).

Residues 1–35 (MLGWNKHVFFSESRINFRCLLRKKLKKRCPLSARF) are Cytoplasmic-facing. Residues 36–56 (VLVLLLIVLIFILKMGYKQLI) form a helical; Signal-anchor for type II membrane protein membrane-spanning segment. At 57–440 (YKLNHPPLRR…NLIGDGFLDE (384 aa)) the chain is on the lumenal side. Glu336 serves as the catalytic Nucleophile.

It belongs to the glycosyltransferase 15 family.

Its subcellular location is the cytoplasm. It localises to the nucleus. The protein resides in the golgi apparatus membrane. Probable mannosyltransferase involved in O-glycosylation of cell wall and secreted proteins. Transfers an alpha-D-mannosyl residue from GDP-mannose into lipid-linked oligosaccharide, forming an alpha-(1-&gt;2)-D-mannosyl-D-mannose linkage. This chain is O-glycoside alpha-1,2-mannosyltransferase homolog 4 (omh4), found in Schizosaccharomyces pombe (strain 972 / ATCC 24843) (Fission yeast).